The sequence spans 1163 residues: Putative beta-glucuronidase (1163 aa).

The N-terminal stretch at 1–20 (MPRFLKYILGLFLISISAFG) is a signal peptide.

It belongs to the glycosyl hydrolase 2 family.

Its subcellular location is the periplasm. The catalysed reaction is a beta-D-glucuronoside + H2O = D-glucuronate + an alcohol. Functionally, glycoside hydrolase involved in ulvan degradation. Ulvan is the main polysaccharide component of the Ulvales (green seaweed) cell wall. It is composed of disaccharide building blocks comprising 3-sulfated rhamnose (Rha3S) linked to D-glucuronic acid (GlcA), L-iduronic acid (IduA), or D-xylose (Xyl). This Formosa agariphila (strain DSM 15362 / KCTC 12365 / LMG 23005 / KMM 3901 / M-2Alg 35-1) protein is Putative beta-glucuronidase.